A 293-amino-acid chain; its full sequence is DegV domain-containing protein MG326 homolog (293 aa).

One can recognise a DegV domain in the interval 3 to 289 (TAIITDSTAS…IDAFSISLLL (287 aa)). Positions 62 and 94 each coordinate hexadecanoate.

Its function is as follows. May bind long-chain fatty acids, such as palmitate, and may play a role in lipid transport or fatty acid metabolism. This chain is DegV domain-containing protein MG326 homolog, found in Mycoplasma pneumoniae (strain ATCC 29342 / M129 / Subtype 1) (Mycoplasmoides pneumoniae).